A 452-amino-acid polypeptide reads, in one-letter code: Sulfide:quinone oxidoreductase, mitochondrial (452 aa).

FAD-binding positions include 54-55 (AG), Glu-77, Gln-85, and Val-120. Cys-204 (cysteine persulfide intermediate) is an active-site residue. A disulfide bridge links Cys-204 with Cys-380. FAD contacts are provided by residues Asp-337 and 345–348 (KTAA). Catalysis depends on Cys-380, which acts as the Cysteine persulfide intermediate.

The protein belongs to the SQRD family. It depends on FAD as a cofactor.

It is found in the mitochondrion. The enzyme catalyses ubiquinone-10 + hydrogen sulfide + sulfite + 2 H(+) = ubiquinol-10 + thiosulfate. It catalyses the reaction a quinone + hydrogen sulfide + glutathione + H(+) = S-sulfanylglutathione + a quinol. Catalyzes the oxidation of hydrogen sulfide, with the help of a quinone. The chain is Sulfide:quinone oxidoreductase, mitochondrial from Dictyostelium discoideum (Social amoeba).